A 109-amino-acid polypeptide reads, in one-letter code: Ribonuclease P protein component (109 aa).

The protein belongs to the RnpA family. As to quaternary structure, consists of a catalytic RNA component (M1 or rnpB) and a protein subunit.

The enzyme catalyses Endonucleolytic cleavage of RNA, removing 5'-extranucleotides from tRNA precursor.. RNaseP catalyzes the removal of the 5'-leader sequence from pre-tRNA to produce the mature 5'-terminus. It can also cleave other RNA substrates such as 4.5S RNA. The protein component plays an auxiliary but essential role in vivo by binding to the 5'-leader sequence and broadening the substrate specificity of the ribozyme. The polypeptide is Ribonuclease P protein component (Nitratiruptor sp. (strain SB155-2)).